A 353-amino-acid polypeptide reads, in one-letter code: D-glycerol 3-phosphate phosphatase (353 aa).

The active-site Nucleophile is Asp14. Positions 14, 16, and 209 each coordinate Mg(2+). Asp16 serves as the catalytic Proton donor.

Belongs to the HAD-like hydrolase superfamily. Homodimer. Requires Mg(2+) as cofactor. Co(2+) serves as cofactor. The cofactor is Mn(2+).

The catalysed reaction is sn-glycerol 1-phosphate + H2O = glycerol + phosphate. It functions in the pathway glycerolipid metabolism. Its function is as follows. Dephosphorylates D-glycerol 3-phosphate (sn-glycerol 1-phosphate). Is the final enzyme involved in the recycling/catabolism of glycerophospholipid polar heads. To a lesser extent, is also able to act on glycerol 2-phosphate and D-ribulose 5-phosphate, but cannot use D-glyceraldehyde 3-phosphate, dihydroxyacetone-phosphate, UMP or GMP as substrates. This Mycobacterium tuberculosis (strain ATCC 25618 / H37Rv) protein is D-glycerol 3-phosphate phosphatase.